Here is a 112-residue protein sequence, read N- to C-terminus: Large ribosomal subunit protein uL22 (112 aa).

Belongs to the universal ribosomal protein uL22 family. Part of the 50S ribosomal subunit.

Its function is as follows. This protein binds specifically to 23S rRNA; its binding is stimulated by other ribosomal proteins, e.g. L4, L17, and L20. It is important during the early stages of 50S assembly. It makes multiple contacts with different domains of the 23S rRNA in the assembled 50S subunit and ribosome. In terms of biological role, the globular domain of the protein is located near the polypeptide exit tunnel on the outside of the subunit, while an extended beta-hairpin is found that lines the wall of the exit tunnel in the center of the 70S ribosome. This chain is Large ribosomal subunit protein uL22, found in Finegoldia magna (strain ATCC 29328 / DSM 20472 / WAL 2508) (Peptostreptococcus magnus).